Consider the following 366-residue polypeptide: Peptide chain release factor 2 (366 aa).

Q253 is subject to N5-methylglutamine.

This sequence belongs to the prokaryotic/mitochondrial release factor family. In terms of processing, methylated by PrmC. Methylation increases the termination efficiency of RF2.

It is found in the cytoplasm. In terms of biological role, peptide chain release factor 2 directs the termination of translation in response to the peptide chain termination codons UGA and UAA. The chain is Peptide chain release factor 2 from Yersinia pseudotuberculosis serotype I (strain IP32953).